Consider the following 294-residue polypeptide: GTPase Era (294 aa).

In terms of domain architecture, Era-type G spans 2–171 (NSGVVTIIGR…LSLLIELLPE (170 aa)). Residues 10-17 (GRPSAGKS) form a G1 region. 10–17 (GRPSAGKS) serves as a coordination point for GTP. The segment at 36–40 (QTTRN) is G2. The interval 57–60 (DTPG) is G3. GTP-binding positions include 57-61 (DTPGY) and 119-122 (NKAD). The interval 119 to 122 (NKAD) is G4. Residues 150–152 (ISA) are G5. Positions 202-280 (TREEIPHALY…QLDLQVRVNK (79 aa)) constitute a KH type-2 domain.

This sequence belongs to the TRAFAC class TrmE-Era-EngA-EngB-Septin-like GTPase superfamily. Era GTPase family. Monomer.

The protein resides in the cytoplasm. Its subcellular location is the cell inner membrane. An essential GTPase that binds both GDP and GTP, with rapid nucleotide exchange. Plays a role in 16S rRNA processing and 30S ribosomal subunit biogenesis and possibly also in cell cycle regulation and energy metabolism. This Treponema denticola (strain ATCC 35405 / DSM 14222 / CIP 103919 / JCM 8153 / KCTC 15104) protein is GTPase Era.